The chain runs to 417 residues: MAEYKNYTLNFGPVHPAAHGVLRLILELDGETVVRADPHVGLLHRGTEKLAEFKPYNQSIGYMDRLDYVSMMCNEHAYVMAIEKLLELEVPERAQYIRVMFAEMTRILNHLLWVAACGIDLGAMTVFLYAFRVREDLFDCYEAVSGARMHAAYFRPGGVARDLPTQMPQYKQTRFTSKRKTKKINANRQGSMLDFLDSFVVDFDKSLDEIDTLLTDNRLWKQRTVDIGVVTAERAVELGFTGPMLRGSGVAWDLRKSQPYEVYDKLDFDIPVGANGDCYDRYLVRMAEMRESNKLIKQCVDWLRANQGPVLSDNHKVAPPKRNAMKNNMEELIHHFKLFSEGYCTPEGEVYVGTEHPKGEFGVYIKSDGANKPYRLKMKAPGFTHISAMDELLSGHMLADTPAIISTIDVVFGDVDR.

Belongs to the complex I 49 kDa subunit family. NDH-1 is composed of 14 different subunits. Subunits NuoB, C, D, E, F, and G constitute the peripheral sector of the complex.

Its subcellular location is the cell inner membrane. It catalyses the reaction a quinone + NADH + 5 H(+)(in) = a quinol + NAD(+) + 4 H(+)(out). Functionally, NDH-1 shuttles electrons from NADH, via FMN and iron-sulfur (Fe-S) centers, to quinones in the respiratory chain. The immediate electron acceptor for the enzyme in this species is believed to be ubiquinone. Couples the redox reaction to proton translocation (for every two electrons transferred, four hydrogen ions are translocated across the cytoplasmic membrane), and thus conserves the redox energy in a proton gradient. The polypeptide is NADH-quinone oxidoreductase subunit D (Francisella philomiragia subsp. philomiragia (strain ATCC 25017 / CCUG 19701 / FSC 153 / O#319-036)).